Here is a 234-residue protein sequence, read N- to C-terminus: Large ribosomal subunit protein uL1 (234 aa).

This sequence belongs to the universal ribosomal protein uL1 family. Part of the 50S ribosomal subunit.

Functionally, binds directly to 23S rRNA. The L1 stalk is quite mobile in the ribosome, and is involved in E site tRNA release. In terms of biological role, protein L1 is also a translational repressor protein, it controls the translation of the L11 operon by binding to its mRNA. This chain is Large ribosomal subunit protein uL1, found in Pectobacterium atrosepticum (strain SCRI 1043 / ATCC BAA-672) (Erwinia carotovora subsp. atroseptica).